The sequence spans 328 residues: MSEKIYEYKDENNWFIGKMTGHNLISGWGVKHTTIKKIDDLLDGIAATLDWENPKGYDVSVVRYQSPLSLITFIIDMINQETQREIKVTPHAGTILLIENAKLLAVYLPEGGVSTATFFATSEQGFGDIILIATRNEGKTKEFRNLFGQLGYRVENLNDYPELPEVAETGTTFEENARLKAETISRLTGKMVLADDSGLKVDALGGLPGVWSARFSGPDATDAKNNTKLLHELAMVFDQKKRSAQFHTTLVVAAPNKDSLVMEAEWPGYIATQPKGENGFGYDPVFIVGETGRHAAELEADQKNQLSHRGQAVRKLMEVFPAWQAKQS.

Residues 1–129 are unknown; that stretch reads MSEKIYEYKD…ATSEQGFGDI (129 aa). The segment at 130–324 is NTP pyrophosphatase; the sequence is ILIATRNEGK…KLMEVFPAWQ (195 aa). 134–139 contacts substrate; that stretch reads TRNEGK. Catalysis depends on aspartate 196, which acts as the Proton acceptor. Aspartate 196 is a binding site for Mg(2+). Substrate contacts are provided by residues serine 197, 280–283, lysine 303, and 308–309; these read FGYD and HR.

Belongs to the HAM1 NTPase family. Homodimer. Requires Mg(2+) as cofactor.

It catalyses the reaction XTP + H2O = XMP + diphosphate + H(+). The enzyme catalyses dITP + H2O = dIMP + diphosphate + H(+). The catalysed reaction is ITP + H2O = IMP + diphosphate + H(+). Pyrophosphatase that catalyzes the hydrolysis of nucleoside triphosphates to their monophosphate derivatives, with a high preference for the non-canonical purine nucleotides XTP (xanthosine triphosphate), dITP (deoxyinosine triphosphate) and ITP. Seems to function as a house-cleaning enzyme that removes non-canonical purine nucleotides from the nucleotide pool, thus preventing their incorporation into DNA/RNA and avoiding chromosomal lesions. In Streptococcus pyogenes serotype M3 (strain ATCC BAA-595 / MGAS315), this protein is dITP/XTP pyrophosphatase.